A 210-amino-acid polypeptide reads, in one-letter code: Uridine kinase (210 aa).

Residue Gly14–Thr21 participates in ATP binding.

It belongs to the uridine kinase family.

It localises to the cytoplasm. The enzyme catalyses uridine + ATP = UMP + ADP + H(+). It carries out the reaction cytidine + ATP = CMP + ADP + H(+). It functions in the pathway pyrimidine metabolism; CTP biosynthesis via salvage pathway; CTP from cytidine: step 1/3. The protein operates within pyrimidine metabolism; UMP biosynthesis via salvage pathway; UMP from uridine: step 1/1. This is Uridine kinase from Deinococcus radiodurans (strain ATCC 13939 / DSM 20539 / JCM 16871 / CCUG 27074 / LMG 4051 / NBRC 15346 / NCIMB 9279 / VKM B-1422 / R1).